Consider the following 728-residue polypeptide: Lutropin-choriogonadotropic hormone receptor (728 aa).

The signal sequence occupies residues Met-1–Gly-19. The Extracellular segment spans residues Gly-20–Val-389. LRR repeat units follow at residues Leu-92–Asn-116, Leu-117–Ser-142, Ala-144–Gly-166, Ser-168–Gly-191, Lys-193–Gly-215, and Ala-216–Ala-239. Residues Leu-390–Ile-410 form a helical membrane-spanning segment. The Cytoplasmic portion of the chain corresponds to Thr-411–Arg-420. Residues Phe-421–Ala-441 form a helical membrane-spanning segment. The Extracellular portion of the chain corresponds to Ser-442 to Thr-466. Cys-464 and Cys-539 are joined by a disulfide. Residues Ala-467–Ile-487 traverse the membrane as a helical segment. The Cytoplasmic segment spans residues Glu-488–His-507. Residues Ala-508–Leu-528 form a helical membrane-spanning segment. Topologically, residues Gly-529–Ala-551 are extracellular. Residues Tyr-552–Ile-572 form a helical membrane-spanning segment. Over Lys-573–Arg-595 the chain is Cytoplasmic. Residues Met-596–Ser-616 traverse the membrane as a helical segment. Residues Ala-617–Lys-630 are Extracellular-facing. A helical membrane pass occupies residues Ile-631–Phe-651. The Cytoplasmic segment spans residues Thr-652–Gln-728.

This sequence belongs to the G-protein coupled receptor 1 family. FSH/LSH/TSH subfamily. As to expression, expressed in ovarian follicle granulosa cells. Expressed in ovarian follicle theca cells.

It is found in the cell membrane. Functionally, receptor for lutropin-choriogonadotropic hormone. The activity of this receptor is mediated by G proteins which activate adenylate cyclase. The sequence is that of Lutropin-choriogonadotropic hormone receptor from Gallus gallus (Chicken).